We begin with the raw amino-acid sequence, 110 residues long: Large ribosomal subunit protein uL22 (110 aa).

The protein belongs to the universal ribosomal protein uL22 family. As to quaternary structure, part of the 50S ribosomal subunit.

This protein binds specifically to 23S rRNA; its binding is stimulated by other ribosomal proteins, e.g. L4, L17, and L20. It is important during the early stages of 50S assembly. It makes multiple contacts with different domains of the 23S rRNA in the assembled 50S subunit and ribosome. Its function is as follows. The globular domain of the protein is located near the polypeptide exit tunnel on the outside of the subunit, while an extended beta-hairpin is found that lines the wall of the exit tunnel in the center of the 70S ribosome. This chain is Large ribosomal subunit protein uL22, found in Shewanella baltica (strain OS223).